Consider the following 364-residue polypeptide: UDP-N-acetylglucosamine--N-acetylmuramyl-(pentapeptide) pyrophosphoryl-undecaprenol N-acetylglucosamine transferase (364 aa).

Residues 12-14 (TGG), N124, R167, S195, I249, 268-273 (ALTVSE), and Q294 each bind UDP-N-acetyl-alpha-D-glucosamine.

This sequence belongs to the glycosyltransferase 28 family. MurG subfamily.

The protein resides in the cell inner membrane. It catalyses the reaction di-trans,octa-cis-undecaprenyl diphospho-N-acetyl-alpha-D-muramoyl-L-alanyl-D-glutamyl-meso-2,6-diaminopimeloyl-D-alanyl-D-alanine + UDP-N-acetyl-alpha-D-glucosamine = di-trans,octa-cis-undecaprenyl diphospho-[N-acetyl-alpha-D-glucosaminyl-(1-&gt;4)]-N-acetyl-alpha-D-muramoyl-L-alanyl-D-glutamyl-meso-2,6-diaminopimeloyl-D-alanyl-D-alanine + UDP + H(+). It functions in the pathway cell wall biogenesis; peptidoglycan biosynthesis. Cell wall formation. Catalyzes the transfer of a GlcNAc subunit on undecaprenyl-pyrophosphoryl-MurNAc-pentapeptide (lipid intermediate I) to form undecaprenyl-pyrophosphoryl-MurNAc-(pentapeptide)GlcNAc (lipid intermediate II). This is UDP-N-acetylglucosamine--N-acetylmuramyl-(pentapeptide) pyrophosphoryl-undecaprenol N-acetylglucosamine transferase from Alteromonas mediterranea (strain DSM 17117 / CIP 110805 / LMG 28347 / Deep ecotype).